We begin with the raw amino-acid sequence, 362 residues long: Apelin receptor A (362 aa).

Residues 1 to 34 lie on the Extracellular side of the membrane; it reads MEPTSEYTETYDYYDTGYNDSGCDYSEWEPSYSL. Asn-19 carries N-linked (GlcNAc...) asparagine glycosylation. Intrachain disulfides connect Cys-23–Cys-286 and Cys-105–Cys-184. The helical transmembrane segment at 35–55 threads the bilayer; sequence IPVLYMLIFILGLSGNGVVIF. The Cytoplasmic portion of the chain corresponds to 56 to 73; the sequence is TVWRAKSKRRAADVYIGN. A helical transmembrane segment spans residues 74–94; it reads LALADLTFVITLPLWAVYTAL. Residues 95–106 lie on the Extracellular side of the membrane; it reads GYHWPFGVALCK. A helical membrane pass occupies residues 107 to 127; sequence ISSYVVLVNMYASVFCLTCLS. Topologically, residues 128–149 are cytoplasmic; the sequence is FDRYLAIVHSLSSGRLRSRATM. The helical transmembrane segment at 150-170 threads the bilayer; it reads LASLGAIWFLSCLLAVPTLLF. Topologically, residues 171–211 are extracellular; sequence RTTVDDTGSNRTTCAMDFSLVTLNQDHESLWIAGLSLSSSA. N-linked (GlcNAc...) asparagine glycosylation occurs at Asn-180. Residues 212-232 form a helical membrane-spanning segment; that stretch reads LGFLLPFLAMTVCYCFIGCTV. The Cytoplasmic portion of the chain corresponds to 233 to 248; the sequence is TRHFSHLRKEDQKKRR. Residues 249–269 form a helical membrane-spanning segment; it reads LLKIITTLVVVFAFCWTPFHV. At 270 to 284 the chain is on the extracellular side; it reads LKSMDALSYLDLAPN. Residues 285 to 305 traverse the membrane as a helical segment; it reads SCGFLHFLLLAHPYATCLAYV. The Cytoplasmic segment spans residues 306–362; that stretch reads NSCLNPFLYAFFDLRFRSQCLCLLNLKKAMHGHMSSMSSTLSAQTQKSEVQSLATKV.

This sequence belongs to the G-protein coupled receptor 1 family. As to expression, first expressed before epiboly in dorsal precursors. During epiboly, expressed in the enveloping layer, yolk syncytial layer and migrating mesendoderm. During segmentation stages, expressed in epithelial structures such as adaxial cells, border cells of the newly formed somites, developing lens, otic vesicles and venous vasculature.

Its subcellular location is the cell membrane. In terms of biological role, g protein-coupled receptor for peptide hormones apelin (apln) and apelin receptor early endogenous ligand (apela), that plays a role in the regulation of normal cardiovascular function and fluid homeostasis. When acting as apelin receptor, activates both G(i) protein pathway that inhibits adenylate cyclase activity, and the beta-arrestin pathway that promotes internalization of the receptor. Also functions as mechanoreceptor that is activated by pathological stimuli in a G-protein-independent fashion to induce beta-arrestin signaling, hence eliciting cardiac hypertrophy. However, the presence of apelin ligand blunts cardiac hypertrophic induction from APLNR/APJ on response to pathological stimuli. Plays a key role in early development such as gastrulation, blood vessels formation and heart morphogenesis by acting as a receptor for apela hormone, promoting endoderm and mesendoderm cell migration and regulating the migration of cells fated to become myocardial progenitors, respectively. Positively regulates angioblast migration toward the embryonic midline, i.e. the position of the future vessel formation, during vasculogenesis. May promote sinus venosus (SV)-derived endothelial cells migration into the developing heart to promote coronary blood vessel development. Required for cardiovascular development, particularly for intersomitic vein angiogenesis by acting as a receptor for apln hormone. Also plays a role in various processes in adults such as regulation of blood vessel formation, blood pressure, heart contractility, and heart failure. Acts redundantly with agtrl1b in heart development. The sequence is that of Apelin receptor A (aplnra) from Danio rerio (Zebrafish).